Consider the following 384-residue polypeptide: Proteinase K (384 aa).

An N-terminal signal peptide occupies residues 1 to 15 (MRLSVLLSLLPLALG). Residues 16–105 (APAVEQRSEA…IEQDAVVTIN (90 aa)) constitute a propeptide that is removed on maturation. The Inhibitor I9 domain maps to 39 to 104 (KYIVKFKEGS…YIEQDAVVTI (66 aa)). Residues 112–384 (PWGLARISST…NLLAYNNYQA (273 aa)) enclose the Peptidase S8 domain. A Ca(2+)-binding site is contributed by Thr121. Cys139 and Cys228 are oxidised to a cystine. Residues Asp144 and His174 each act as charge relay system in the active site. Positions 280, 282, and 305 each coordinate Ca(2+). The cysteines at positions 283 and 354 are disulfide-linked. The active-site Charge relay system is Ser329. Asp365 serves as a coordination point for Ca(2+).

The protein belongs to the peptidase S8 family. Ca(2+) serves as cofactor.

It carries out the reaction Hydrolysis of keratin, and of other proteins with subtilisin-like specificity. Hydrolyzes peptide amides.. In terms of biological role, hydrolyzes keratin at aromatic and hydrophobic residues. The chain is Proteinase K (PROK) from Parengyodontium album (Tritirachium album).